Consider the following 303-residue polypeptide: Mycothiol acetyltransferase (303 aa).

2 N-acetyltransferase domains span residues Ala-10–Pro-156 and Leu-162–Arg-303. Glu-41 contacts 1D-myo-inositol 2-(L-cysteinylamino)-2-deoxy-alpha-D-glucopyranoside. Position 86 to 88 (Leu-86 to Val-88) interacts with acetyl-CoA. Glu-189, Lys-228, and Glu-235 together coordinate 1D-myo-inositol 2-(L-cysteinylamino)-2-deoxy-alpha-D-glucopyranoside. Acetyl-CoA-binding positions include Leu-239–Val-241 and Ser-246–Arg-252. Tyr-272 contacts 1D-myo-inositol 2-(L-cysteinylamino)-2-deoxy-alpha-D-glucopyranoside. Asn-277–Arg-282 contacts acetyl-CoA.

Belongs to the acetyltransferase family. MshD subfamily. As to quaternary structure, monomer.

It carries out the reaction 1D-myo-inositol 2-(L-cysteinylamino)-2-deoxy-alpha-D-glucopyranoside + acetyl-CoA = mycothiol + CoA + H(+). In terms of biological role, catalyzes the transfer of acetyl from acetyl-CoA to desacetylmycothiol (Cys-GlcN-Ins) to form mycothiol. The polypeptide is Mycothiol acetyltransferase (Kineococcus radiotolerans (strain ATCC BAA-149 / DSM 14245 / SRS30216)).